The chain runs to 484 residues: Glutamate--tRNA ligase (484 aa).

The 'HIGH' region motif lies at Pro11–Asn21. Residues Cys108, Cys110, Cys135, and Asp137 each coordinate Zn(2+). The 'KMSKS' region signature appears at Lys245–Arg249. Lys248 is an ATP binding site.

Belongs to the class-I aminoacyl-tRNA synthetase family. Glutamate--tRNA ligase type 1 subfamily. As to quaternary structure, monomer. Requires Zn(2+) as cofactor.

It is found in the cytoplasm. It carries out the reaction tRNA(Glu) + L-glutamate + ATP = L-glutamyl-tRNA(Glu) + AMP + diphosphate. In terms of biological role, catalyzes the attachment of glutamate to tRNA(Glu) in a two-step reaction: glutamate is first activated by ATP to form Glu-AMP and then transferred to the acceptor end of tRNA(Glu). The sequence is that of Glutamate--tRNA ligase from Dehalococcoides mccartyi (strain ATCC BAA-2266 / KCTC 15142 / 195) (Dehalococcoides ethenogenes (strain 195)).